The sequence spans 546 residues: Membrane protein insertase YidC (546 aa).

The chain crosses the membrane as a helical span at residues 8-28; the sequence is ILLATVLSVGILILWQVIFPT. Residues 31–70 form a disordered region; the sequence is VPPKPAPPPAAEVAKPAAPASPAPGAAAPAVPAPPPDAPE. A compositionally biased stretch (low complexity) spans 41-60; sequence AEVAKPAAPASPAPGAAAPA. 5 helical membrane passes run 326–346, 356–376, 422–442, 459–479, and 498–518; these read IDYG…LYVM, WGVA…PLTY, LGGC…YAAL, LTAH…SFVM, and FFPG…TLYI.

The protein belongs to the OXA1/ALB3/YidC family. Type 1 subfamily. In terms of assembly, interacts with the Sec translocase complex via SecD. Specifically interacts with transmembrane segments of nascent integral membrane proteins during membrane integration.

It is found in the cell inner membrane. In terms of biological role, required for the insertion and/or proper folding and/or complex formation of integral membrane proteins into the membrane. Involved in integration of membrane proteins that insert both dependently and independently of the Sec translocase complex, as well as at least some lipoproteins. Aids folding of multispanning membrane proteins. This is Membrane protein insertase YidC from Anaeromyxobacter sp. (strain K).